Reading from the N-terminus, the 307-residue chain is Dioxygenase swnH1 (307 aa).

Fe cation is bound by residues His149, Asp151, and His227.

This sequence belongs to the PhyH family. Homodimer. Fe cation is required as a cofactor.

It functions in the pathway mycotoxin biosynthesis. Its function is as follows. Dioxygenase; part of the gene cluster that mediates the biosynthesis of swainsonine (SW), a cytotoxic fungal alkaloid and a potential cancer therapy drug. Swainsonine production occurs via a multibranched pathway and is dispensable for fungal colonization of plants and infection of insect hosts. The first step of swainsonine biosynthesis is the production of the precursor pipecolic acid (PA) via conversion of L-lysine (Lys) to 1-piperideine-6-carboxylate (P6C) by the aminotransferase swnA, the latter being further reduced to PA by the reductase swnR. PA can be converted from lysine by both the SW biosynthetic cluster and the unclustered genes such as lysine cyclodeaminase. The PKS-NRPS hybrid synthetase swnK uptakes and condensates PA and malonyl-CoA with and without skipping of the ketoreductase (KR) domain in order to produce 3 intermediates, 1-oxoindolizidine, (1S)-1-hydroxyindolizin, and (1R)-1-hydroxyindolizine; with the transisomer (1S)-1-hydroxyindolizin being predominant. The terminal thioester reductase (TE) domain of swnK is involved in reduction of the thioester bond to release the intermediate aldehydes. The oxidoreductase swnN could contribute to the reduction of 1-oxoindolizidine to (1S)-1-hydroxyindolizin and (1R)-1-hydroxyindolizine, contributing to the major route of SW production. The dioxygenase swnH2 would be responsible for the oxidization of (1R)-1-hydroxyindolizine into (1R,2S)-1,2-dihydroxyindolizine and of (1S)-1-hydroxyindolizin to yield both (1R,2S)-1,2-dihydroxyindolizine and (1S,2S)-1,2-dihydroxyindolizine. The dioxygenase swnH1 then performs the conversion of the 1,2-dihydroxyindolizine epimers to SW. The chain is Dioxygenase swnH1 from Metarhizium robertsii (strain ARSEF 23 / ATCC MYA-3075) (Metarhizium anisopliae (strain ARSEF 23)).